A 380-amino-acid polypeptide reads, in one-letter code: Maintenance of mitochondrial morphology protein 1 (380 aa).

Residues 1-64 (MQGRAIWAEG…IVPSLSFIQG (64 aa)) lie on the Lumenal side of the membrane. Residues 65–85 (FMAGQAVLLMLFLGLFRYFFM) form a helical membrane-spanning segment. Topologically, residues 86-380 (TSSPGTRAQQ…IGTSPADPLA (295 aa)) are cytoplasmic. An SMP-LTD domain is found at 147-369 (APESLDWLNV…WPHFWHIPLP (223 aa)).

This sequence belongs to the MMM1 family. As to quaternary structure, homodimer. Component of the ER-mitochondria encounter structure (ERMES) or MDM complex, composed of MMM1, MDM10, MDM12 and MDM34. An MMM1 homodimer associates with one molecule of MDM12 on each side in a pairwise head-to-tail manner, and the SMP-LTD domains of MMM1 and MDM12 generate a continuous hydrophobic tunnel for phospholipid trafficking.

It is found in the endoplasmic reticulum membrane. Component of the ERMES/MDM complex, which serves as a molecular tether to connect the endoplasmic reticulum (ER) and mitochondria. Components of this complex are involved in the control of mitochondrial shape and protein biogenesis, and function in nonvesicular lipid trafficking between the ER and mitochondria. The MDM12-MMM1 subcomplex functions in the major beta-barrel assembly pathway that is responsible for biogenesis of all outer membrane beta-barrel proteins, and acts in a late step after the SAM complex. The MDM10-MDM12-MMM1 subcomplex further acts in the TOM40-specific pathway after the action of the MDM12-MMM1 complex. Essential for establishing and maintaining the structure of mitochondria and maintenance of mtDNA nucleoids. In Malassezia globosa (strain ATCC MYA-4612 / CBS 7966) (Dandruff-associated fungus), this protein is Maintenance of mitochondrial morphology protein 1.